We begin with the raw amino-acid sequence, 81 residues long: Sulfur carrier protein TusA (81 aa).

Cysteine 19 acts as the Cysteine persulfide intermediate in catalysis.

This sequence belongs to the sulfur carrier protein TusA family. As to quaternary structure, interacts with IscS.

It is found in the cytoplasm. It functions in the pathway tRNA modification. In terms of biological role, sulfur carrier protein involved in sulfur trafficking in the cell. Part of a sulfur-relay system required for 2-thiolation during synthesis of 2-thiouridine of the modified wobble base 5-methylaminomethyl-2-thiouridine (mnm(5)s(2)U) in tRNA. Interacts with IscS and stimulates its cysteine desulfurase activity. Accepts an activated sulfur from IscS, which is then transferred to TusD, and thus determines the direction of sulfur flow from IscS to 2-thiouridine formation. Also appears to be involved in sulfur transfer for the biosynthesis of molybdopterin. This chain is Sulfur carrier protein TusA, found in Enterobacter sp. (strain 638).